The primary structure comprises 928 residues: Protein ARABIDILLO 2 (928 aa).

Positions 3-8 match the Nuclear localization signal motif; the sequence is RRVRQR. An F-box domain is found at 37–83; it reads YVNWTSLPYDTVFHLFTRLNYRDRASLASTCRTWRSLGASSFLWSSL. ARM repeat units lie at residues 147–186, 237–278, 303–341, 370–409, 419–458, 460–499, 501–543, 545–585, 591–630, 632–674, 676–715, 717–757, and 824–864; these read AARH…KLRV, TSNI…KSSQ, KGKV…DLIR, SQGL…TFIV, CGRA…NLSV, AKVA…NLSV, EEHK…NLAA, DKCS…NLAA, GNNA…NLAF, DKNR…GLSV, EANS…NLSF, PGNA…YMFD, and IPEA…QFTI.

Belongs to the beta-catenin family. Expressed ubiquitously.

The protein resides in the nucleus. Its function is as follows. Promotes lateral root initiation and development, independently of auxin (IAA) and abscisis acid (ABA). The sequence is that of Protein ARABIDILLO 2 from Arabidopsis thaliana (Mouse-ear cress).